Consider the following 362-residue polypeptide: Probable dual-specificity RNA methyltransferase RlmN (362 aa).

The Proton acceptor role is filled by E105. The 234-residue stretch at 111–344 (HEYGNSICVT…VTIRREQGHD (234 aa)) folds into the Radical SAM core domain. C118 and C349 are oxidised to a cystine. [4Fe-4S] cluster is bound by residues C125, C129, and C132. S-adenosyl-L-methionine-binding positions include 175–176 (GE), S207, 230–232 (SLH), and N306. C349 acts as the S-methylcysteine intermediate in catalysis.

This sequence belongs to the radical SAM superfamily. RlmN family. Requires [4Fe-4S] cluster as cofactor.

The protein localises to the cytoplasm. The catalysed reaction is adenosine(2503) in 23S rRNA + 2 reduced [2Fe-2S]-[ferredoxin] + 2 S-adenosyl-L-methionine = 2-methyladenosine(2503) in 23S rRNA + 5'-deoxyadenosine + L-methionine + 2 oxidized [2Fe-2S]-[ferredoxin] + S-adenosyl-L-homocysteine. It carries out the reaction adenosine(37) in tRNA + 2 reduced [2Fe-2S]-[ferredoxin] + 2 S-adenosyl-L-methionine = 2-methyladenosine(37) in tRNA + 5'-deoxyadenosine + L-methionine + 2 oxidized [2Fe-2S]-[ferredoxin] + S-adenosyl-L-homocysteine. Functionally, specifically methylates position 2 of adenine 2503 in 23S rRNA and position 2 of adenine 37 in tRNAs. The protein is Probable dual-specificity RNA methyltransferase RlmN of Bacillus cereus (strain B4264).